A 193-amino-acid chain; its full sequence is Protein GrpE (193 aa).

Positions 1–26 (MTKKHHKEQEEIQETIKTEAAEENVG) are disordered. Basic and acidic residues predominate over residues 7–20 (KEQEEIQETIKTEA).

It belongs to the GrpE family. In terms of assembly, homodimer.

The protein localises to the cytoplasm. Its function is as follows. Participates actively in the response to hyperosmotic and heat shock by preventing the aggregation of stress-denatured proteins, in association with DnaK and GrpE. It is the nucleotide exchange factor for DnaK and may function as a thermosensor. Unfolded proteins bind initially to DnaJ; upon interaction with the DnaJ-bound protein, DnaK hydrolyzes its bound ATP, resulting in the formation of a stable complex. GrpE releases ADP from DnaK; ATP binding to DnaK triggers the release of the substrate protein, thus completing the reaction cycle. Several rounds of ATP-dependent interactions between DnaJ, DnaK and GrpE are required for fully efficient folding. The sequence is that of Protein GrpE from Chlorobaculum parvum (strain DSM 263 / NCIMB 8327) (Chlorobium vibrioforme subsp. thiosulfatophilum).